A 134-amino-acid polypeptide reads, in one-letter code: Small ribosomal subunit protein uS11 (134 aa).

It belongs to the universal ribosomal protein uS11 family. In terms of assembly, part of the 30S ribosomal subunit. Interacts with proteins S7 and S18. Binds to IF-3.

Its function is as follows. Located on the platform of the 30S subunit, it bridges several disparate RNA helices of the 16S rRNA. Forms part of the Shine-Dalgarno cleft in the 70S ribosome. This is Small ribosomal subunit protein uS11 from Paracidovorax citrulli (strain AAC00-1) (Acidovorax citrulli).